The following is a 486-amino-acid chain: Cardiolipin synthase A (486 aa).

Helical transmembrane passes span 3 to 23 (TFYTVISWLSVFGYWLLIAGV) and 38 to 58 (MAWLLIIYILPLVGIIAYLSF). 2 PLD phosphodiesterase domains span residues 219–246 (MDLRQHRKIVLIDNYVAYTGSMNMVDPR) and 399–426 (EGGLLHSKSVLVDGQLSLVGTVNLDMRS). Active-site residues include H224, K226, D231, H404, K406, and D411.

The protein belongs to the phospholipase D family. Cardiolipin synthase subfamily. ClsA sub-subfamily.

It is found in the cell inner membrane. The catalysed reaction is 2 a 1,2-diacyl-sn-glycero-3-phospho-(1'-sn-glycerol) = a cardiolipin + glycerol. Its function is as follows. Catalyzes the reversible phosphatidyl group transfer from one phosphatidylglycerol molecule to another to form cardiolipin (CL) (diphosphatidylglycerol) and glycerol. The chain is Cardiolipin synthase A from Yersinia pseudotuberculosis serotype O:1b (strain IP 31758).